Consider the following 257-residue polypeptide: Flagellar brake protein YcgR 1 (257 aa).

The span at 1–18 (MDTTQSNGQTDTQGQLHA) shows a compositional bias: polar residues. A disordered region spans residues 1 to 30 (MDTTQSNGQTDTQGQLHAQTAEGGNDFGRR). Residues 133–246 (QRREYFRVDA…AENTLQRLIT (114 aa)) enclose the PilZ domain.

Belongs to the YcgR family. In terms of assembly, monomer. Interacts with the flagellar basal bodies.

The protein localises to the bacterial flagellum basal body. Acts as a flagellar brake, regulating swimming and swarming in a bis-(3'-5') cyclic diguanylic acid (c-di-GMP)-dependent manner. Binds 1 c-di-GMP dimer per subunit. Increasing levels of c-di-GMP lead to decreased motility. This Paraburkholderia phytofirmans (strain DSM 17436 / LMG 22146 / PsJN) (Burkholderia phytofirmans) protein is Flagellar brake protein YcgR 1.